A 397-amino-acid polypeptide reads, in one-letter code: Putative gustatory receptor 93c (397 aa).

Over 1–12 (MIERLKKVSLPA) the chain is Cytoplasmic. A helical membrane pass occupies residues 13–33 (LSAFILFCSCHYGRILGVICF). At 34 to 87 (DIGQRTSDDSLVVRNRHQFKWFCLSCRLISVTAVCCFCAPYVADIEDPYERLLQ) the chain is on the extracellular side. Residues 88–108 (CFRLSASLICGICIIVVQVCY) form a helical membrane-spanning segment. Over 109-141 (EKELLRMIISFLRLFRRVRRLSSLKRIGFGGKR) the chain is Cytoplasmic. Residues 142–162 (EFFLLLFKFICLVYELYSEIC) form a helical membrane-spanning segment. At 163 to 179 (QLWHLPDSLSLFATLCE) the chain is on the extracellular side. The chain crosses the membrane as a helical span at residues 180–200 (IFLEIGSLMIIHIGFVGYLSV). The Cytoplasmic portion of the chain corresponds to 201–266 (AALYSEVNSF…RTFHRLLELP (66 aa)). Residues 267 to 287 (VLIILLGKIFATTILSYEVII) form a helical membrane-spanning segment. Over 288 to 295 (RPELYARK) the chain is Extracellular. A helical transmembrane segment spans residues 296 to 316 (IGMWGLVVKSFADVILLTLAV). The Cytoplasmic segment spans residues 317–371 (HEAVSSSRMMRRLSLENFPITDHKAWHMKWEMFLSRLNFFEFRVRPLGLFEVSNE). Residues 372 to 392 (VILLFLSSMITYFTYVVQYGI) traverse the membrane as a helical segment. Over 393 to 397 (QTNRL) the chain is Extracellular.

This sequence belongs to the insect chemoreceptor superfamily. Gustatory receptor (GR) family. Gr93a subfamily. In larvae, is expressed in neurons of the posterior pharyngeal sense organ.

Its subcellular location is the cell membrane. In terms of biological role, probable gustatory receptor which mediates acceptance or avoidance behavior, depending on its substrates. The protein is Putative gustatory receptor 93c (Gr93c) of Drosophila melanogaster (Fruit fly).